The sequence spans 187 residues: Probable chemoreceptor glutamine deamidase CheD (187 aa).

The interval 164 to 187 is disordered; the sequence is APQDVRRPTPPPMPAVASGDVDLF.

It belongs to the CheD family.

It carries out the reaction L-glutaminyl-[protein] + H2O = L-glutamyl-[protein] + NH4(+). Functionally, probably deamidates glutamine residues to glutamate on methyl-accepting chemotaxis receptors (MCPs), playing an important role in chemotaxis. The chain is Probable chemoreceptor glutamine deamidase CheD from Caulobacter vibrioides (strain ATCC 19089 / CIP 103742 / CB 15) (Caulobacter crescentus).